Here is a 169-residue protein sequence, read N- to C-terminus: Gastrula zinc finger protein XlCGF62.1 (169 aa).

C2H2-type zinc fingers lie at residues 6–28 (FICT…IRTH), 34–56 (FICT…YKTH), 62–84 (FICT…HRSH), 90–113 (FTCT…QAIH), 119–141 (FICT…KRTH), and 147–169 (FVCT…KRTH).

This sequence belongs to the krueppel C2H2-type zinc-finger protein family.

It is found in the nucleus. Its function is as follows. May be involved in transcriptional regulation. This chain is Gastrula zinc finger protein XlCGF62.1, found in Xenopus laevis (African clawed frog).